The sequence spans 471 residues: Ribulose bisphosphate carboxylase large chain (471 aa).

Substrate is bound by residues Asn115 and Thr165. Lys167 serves as the catalytic Proton acceptor. A substrate-binding site is contributed by Lys169. The Mg(2+) site is built by Lys193, Asp195, and Glu196. Lys193 carries the N6-carboxylysine modification. The active-site Proton acceptor is His286. Substrate is bound by residues Arg287, His319, and Ser371.

The protein belongs to the RuBisCO large chain family. Type I subfamily. In terms of assembly, heterohexadecamer of 8 large chains and 8 small chains. It depends on Mg(2+) as a cofactor.

It is found in the carboxysome. The enzyme catalyses 2 (2R)-3-phosphoglycerate + 2 H(+) = D-ribulose 1,5-bisphosphate + CO2 + H2O. The catalysed reaction is D-ribulose 1,5-bisphosphate + O2 = 2-phosphoglycolate + (2R)-3-phosphoglycerate + 2 H(+). RuBisCO catalyzes two reactions: the carboxylation of D-ribulose 1,5-bisphosphate, the primary event in carbon dioxide fixation, as well as the oxidative fragmentation of the pentose substrate in the photorespiration process. Both reactions occur simultaneously and in competition at the same active site. This Synechococcus sp. (strain RCC307) protein is Ribulose bisphosphate carboxylase large chain.